We begin with the raw amino-acid sequence, 458 residues long: Type III intermediate filament (458 aa).

The segment at 1-100 is head; sequence MEKGYKMNRS…KVNRTNEKAE (100 aa). The IF rod domain occupies 97 to 405; the sequence is EKAEMIELND…KLLEGEENRI (309 aa). The tract at residues 406–458 is tail; it reads SMPLPSFGSMSLSDAMFEQQPFENRTSKKKIVIKTVETSGGDVISETTQKIED.

Belongs to the intermediate filament family.

In Tetronarce californica (Pacific electric ray), this protein is Type III intermediate filament.